A 196-amino-acid chain; its full sequence is Major capsid protein (196 aa).

Residues 27-55 (TAPVRPQRKRRQRGRNNKPRGGNGFARRS) form a disordered region. Positions 32–44 (PQRKRRQRGRNNK) are enriched in basic residues.

Belongs to the luteoviruses capsid protein family.

It is found in the virion. Its function is as follows. Major capsid protein. In Bean leafroll virus (BLRV), this protein is Major capsid protein.